We begin with the raw amino-acid sequence, 1374 residues long: DNA-directed RNA polymerase subunit beta' (1374 aa).

Zn(2+)-binding residues include Cys71, Cys73, Cys86, and Cys89. Residues Asp462, Asp464, and Asp466 each coordinate Mg(2+). Zn(2+)-binding residues include Cys810, Cys884, Cys891, and Cys894.

It belongs to the RNA polymerase beta' chain family. The RNAP catalytic core consists of 2 alpha, 1 beta, 1 beta' and 1 omega subunit. When a sigma factor is associated with the core the holoenzyme is formed, which can initiate transcription. Mg(2+) is required as a cofactor. It depends on Zn(2+) as a cofactor.

The catalysed reaction is RNA(n) + a ribonucleoside 5'-triphosphate = RNA(n+1) + diphosphate. DNA-dependent RNA polymerase catalyzes the transcription of DNA into RNA using the four ribonucleoside triphosphates as substrates. This Rickettsia massiliae (strain Mtu5) protein is DNA-directed RNA polymerase subunit beta'.